The sequence spans 334 residues: uncharacterized protein (334 aa).

The next 2 membrane-spanning stretches (helical) occupy residues 1 to 21 (MFRLLLICITFLALYFGFTFI) and 46 to 66 (ILGLLLLVSCFIIIRFLIIII).

The protein resides in the cell membrane. This is an uncharacterized protein from Rickettsia prowazekii (strain Madrid E).